The following is a 384-amino-acid chain: S-adenosylmethionine synthase (384 aa).

His-15 is a binding site for ATP. Position 17 (Asp-17) interacts with Mg(2+). Glu-43 contacts K(+). Residues Glu-56 and Gln-99 each coordinate L-methionine. Residues 99–109 (QSADINQGVDR) form a flexible loop region. ATP contacts are provided by residues 164-166 (DAK), 230-231 (RF), Asp-239, 245-246 (RK), Ala-262, and Lys-266. Position 239 (Asp-239) interacts with L-methionine. Position 270 (Lys-270) interacts with L-methionine.

The protein belongs to the AdoMet synthase family. As to quaternary structure, homotetramer; dimer of dimers. Mg(2+) serves as cofactor. It depends on K(+) as a cofactor.

The protein resides in the cytoplasm. It catalyses the reaction L-methionine + ATP + H2O = S-adenosyl-L-methionine + phosphate + diphosphate. Its pathway is amino-acid biosynthesis; S-adenosyl-L-methionine biosynthesis; S-adenosyl-L-methionine from L-methionine: step 1/1. Catalyzes the formation of S-adenosylmethionine (AdoMet) from methionine and ATP. The overall synthetic reaction is composed of two sequential steps, AdoMet formation and the subsequent tripolyphosphate hydrolysis which occurs prior to release of AdoMet from the enzyme. The polypeptide is S-adenosylmethionine synthase (Haemophilus influenzae (strain 86-028NP)).